The primary structure comprises 538 residues: Serine/threonine-protein phosphatase 5 (538 aa).

TPR repeat units lie at residues A13 to N46, V48 to Y80, and S81 to D114. Transmembrane regions (helical) follow at residues S163 to V183 and G185 to W205. The Mn(2+) site is built by D282, H284, D311, and N343. The active-site Proton donor is the H344. Residues H392 and H467 each contribute to the Mn(2+) site.

Belongs to the PPP phosphatase family. PP-5 (PP-T) subfamily. In terms of assembly, interacts with PHYA and PHYB, mostly when they are phosphorylated and in Pfr forms. The cofactor is Mn(2+).

The protein resides in the endoplasmic reticulum membrane. It is found in the nucleus membrane. Its subcellular location is the cytoplasm. The protein localises to the nucleus. It localises to the nucleoplasm. The protein resides in the nucleus speckle. It carries out the reaction O-phospho-L-seryl-[protein] + H2O = L-seryl-[protein] + phosphate. It catalyses the reaction O-phospho-L-threonyl-[protein] + H2O = L-threonyl-[protein] + phosphate. Activated by arachidonic acid (AA). Isoform 2 dephosphorylates phosphorylated phytochromes, with a preference toward Pfr forms, and enhances phytochrome-mediated photoresponses, probably by enhancing their stability and their binding affinity for light signal transducers such as NDPK2. Can use para-nitrophenylphosphate (pNPP) as substrate. The polypeptide is Serine/threonine-protein phosphatase 5 (PAPP5) (Arabidopsis thaliana (Mouse-ear cress)).